The chain runs to 315 residues: WD repeat domain-containing protein 83 (315 aa).

WD repeat units lie at residues 23–62 (CQQG…LLKT), 65–104 (GHGY…VTRK), 107–146 (GHAG…MEPI), 151–188 (ESQD…LQVD), 189–228 (YIGS…MLGE), 233–272 (VNKG…LTLK), and 275–313 (VGKA…AAEN).

Belongs to the WD repeat MORG1 family.

It is found in the cytoplasm. Its function is as follows. Molecular scaffold protein for various multimeric protein complexes. Acts as a module in the assembly of a multicomponent scaffold for the ERK pathway, linking ERK responses to specific agonists. Also involved in response to hypoxia by acting as a negative regulator of HIF1A/HIF-1-alpha. The chain is WD repeat domain-containing protein 83 (wdr83) from Danio rerio (Zebrafish).